Reading from the N-terminus, the 156-residue chain is Small ribosomal subunit protein uS7 (156 aa).

Belongs to the universal ribosomal protein uS7 family. Part of the 30S ribosomal subunit. Contacts proteins S9 and S11.

One of the primary rRNA binding proteins, it binds directly to 16S rRNA where it nucleates assembly of the head domain of the 30S subunit. Is located at the subunit interface close to the decoding center, probably blocks exit of the E-site tRNA. This Marinobacter nauticus (strain ATCC 700491 / DSM 11845 / VT8) (Marinobacter aquaeolei) protein is Small ribosomal subunit protein uS7.